The primary structure comprises 189 residues: MIPPVILASQSPRRRELLEKTGIPFSIIVRDTEELKEASMPPQELCLHNAAAKAEAVFREHPDSTVIGADTLVFLEGFPLGKPEDEEEARSMLRKLSGRTHHVCTAVAIRSPLGMKNLAVLTEVTFRELTEKDIRHYMELVDVMDKAGSYAFQEHGEMIISSVRGDTDNVIGLPVRDVMKCLNGLGYRA.

Residue aspartate 70 is the Proton acceptor of the active site.

It belongs to the Maf family. YhdE subfamily. It depends on a divalent metal cation as a cofactor.

It is found in the cytoplasm. The enzyme catalyses dTTP + H2O = dTMP + diphosphate + H(+). It carries out the reaction UTP + H2O = UMP + diphosphate + H(+). Its function is as follows. Nucleoside triphosphate pyrophosphatase that hydrolyzes dTTP and UTP. May have a dual role in cell division arrest and in preventing the incorporation of modified nucleotides into cellular nucleic acids. This chain is dTTP/UTP pyrophosphatase, found in Akkermansia muciniphila (strain ATCC BAA-835 / DSM 22959 / JCM 33894 / BCRC 81048 / CCUG 64013 / CIP 107961 / Muc).